The following is a 101-amino-acid chain: Ubiquitin-related modifier 1 homolog (101 aa).

At glycine 101 the chain carries 1-thioglycine. Residue glycine 101 forms a Glycyl lysine isopeptide (Gly-Lys) (interchain with K-? in acceptor proteins) linkage.

This sequence belongs to the URM1 family. Interacts with cer. C-terminal thiocarboxylation occurs in 2 steps, it is first acyl-adenylated (-COAMP) via the hesA/moeB/thiF part of the MOCS3 homolog, then thiocarboxylated (-COSH) via the rhodanese domain of the MOCS3 homolog.

It is found in the cytoplasm. It participates in tRNA modification; 5-methoxycarbonylmethyl-2-thiouridine-tRNA biosynthesis. In terms of biological role, acts as a sulfur carrier required for 2-thiolation of mcm(5)S(2)U at tRNA wobble positions of cytosolic tRNA(Lys), tRNA(Glu) and tRNA(Gln). Serves as sulfur donor in tRNA 2-thiolation reaction by being thiocarboxylated (-COSH) at its C-terminus by MOCS3. The sulfur is then transferred to tRNA to form 2-thiolation of mcm(5)S(2)U. Also acts as a ubiquitin-like protein (UBL) that is covalently conjugated via an isopeptide bond to lysine residues of target proteins such as Prx2/Jafrac1, Ciao1, Eip71CD and GILT1. The thiocarboxylated form serves as substrate for conjugation and oxidative stress specifically induces the formation of UBL-protein conjugates. This is Ubiquitin-related modifier 1 homolog from Drosophila sechellia (Fruit fly).